Reading from the N-terminus, the 211-residue chain is Cytochrome c biogenesis ATP-binding export protein CcmA (211 aa).

The 203-residue stretch at 8–210 folds into the ABC transporter domain; it reads LEAKNLQCER…EVRRIQLGAV (203 aa). 40–47 is a binding site for ATP; it reads GPNGAGKT.

Belongs to the ABC transporter superfamily. CcmA exporter (TC 3.A.1.107) family. The complex is composed of two ATP-binding proteins (CcmA) and two transmembrane proteins (CcmB).

The protein resides in the cell inner membrane. The catalysed reaction is heme b(in) + ATP + H2O = heme b(out) + ADP + phosphate + H(+). In terms of biological role, part of the ABC transporter complex CcmAB involved in the biogenesis of c-type cytochromes; once thought to export heme, this seems not to be the case, but its exact role is uncertain. Responsible for energy coupling to the transport system. This chain is Cytochrome c biogenesis ATP-binding export protein CcmA, found in Hahella chejuensis (strain KCTC 2396).